A 162-amino-acid polypeptide reads, in one-letter code: Endoribonuclease YbeY (162 aa).

Zn(2+)-binding residues include H128, H132, and H138.

This sequence belongs to the endoribonuclease YbeY family. Zn(2+) serves as cofactor.

The protein resides in the cytoplasm. Functionally, single strand-specific metallo-endoribonuclease involved in late-stage 70S ribosome quality control and in maturation of the 3' terminus of the 16S rRNA. The sequence is that of Endoribonuclease YbeY from Lactococcus lactis subsp. cremoris (strain SK11).